Consider the following 469-residue polypeptide: Protein C-ets-2 (469 aa).

Residues 85–170 (ATFSGFKKEQ…EHLEQMIKEN (86 aa)) enclose the PNT domain. 2 positions are modified to phosphoserine: serine 220 and serine 225. The interval 264-289 (NLLTNNSGTPKDHDSPENGADSFESS) is disordered. Serine 295, serine 298, and serine 301 each carry phosphoserine. The ETS DNA-binding region spans 363–443 (IQLWQFLLEL…SGKRYVYRFV (81 aa)).

Belongs to the ETS family. Phosphorylation by CDK10 at Ser-220 and Ser-225 creates a phosphodegron that targets ETS2 for proteasomal degradation.

It localises to the nucleus. Functionally, transcription factor activating transcription. Binds specifically the DNA GGAA/T core motif (Ets-binding site or EBS) in gene promoters and stimulates transcription. The protein is Protein C-ets-2 (ETS2) of Homo sapiens (Human).